Reading from the N-terminus, the 364-residue chain is 3-isopropylmalate dehydrogenase (364 aa).

78-89 (GPKWGTGAVRPE) is a binding site for NAD(+). Residues Arg96, Arg106, Arg135, and Asp224 each coordinate substrate. The Mg(2+) site is built by Asp224, Asp249, and Asp253. 288 to 299 (GSAPDLPANKVN) is an NAD(+) binding site.

It belongs to the isocitrate and isopropylmalate dehydrogenases family. In terms of assembly, homodimer. The cofactor is Mg(2+). Mn(2+) serves as cofactor.

It localises to the cytoplasm. The enzyme catalyses (2R,3S)-3-isopropylmalate + NAD(+) = 4-methyl-2-oxopentanoate + CO2 + NADH. Its pathway is amino-acid biosynthesis; L-leucine biosynthesis; L-leucine from 3-methyl-2-oxobutanoate: step 3/4. Its function is as follows. Catalyzes the oxidation of 3-carboxy-2-hydroxy-4-methylpentanoate (3-isopropylmalate) to 3-carboxy-4-methyl-2-oxopentanoate. The product decarboxylates to 4-methyl-2 oxopentanoate. The sequence is that of 3-isopropylmalate dehydrogenase (LEU2) from Wickerhamomyces anomalus (strain ATCC 8168 / CBS 5759 / DSM 6766 / JCM 3585 / IAM 12210 / NCYC 432 / NBRC 10213 / NRRL Y-366 / AJ 5027) (Yeast).